The following is a 291-amino-acid chain: Protease HtpX homolog (291 aa).

Helical transmembrane passes span 4–24 (IVLFLATNLAIVLVLSLTMRL) and 39–59 (TSLLIFAAVMGFGGSLISLAI). H145 provides a ligand contact to Zn(2+). Residue E146 is part of the active site. H149 lines the Zn(2+) pocket. 2 helical membrane-spanning segments follow: residues 156 to 176 (VTLALIQGVVNTFVMFLSRII) and 195 to 215 (FFVTMIVAELVLGILASIIVM). E222 lines the Zn(2+) pocket.

Belongs to the peptidase M48B family. It depends on Zn(2+) as a cofactor.

It localises to the cell inner membrane. In Thiobacillus denitrificans (strain ATCC 25259 / T1), this protein is Protease HtpX homolog.